The following is a 248-amino-acid chain: Proteasome subunit alpha (248 aa).

The disordered stretch occupies residues 229–248 (LLEADGATTEAESSAEEEDE).

This sequence belongs to the peptidase T1A family. As to quaternary structure, the 20S proteasome core is composed of 14 alpha and 14 beta subunits that assemble into four stacked heptameric rings, resulting in a barrel-shaped structure. The two inner rings, each composed of seven catalytic beta subunits, are sandwiched by two outer rings, each composed of seven alpha subunits. The catalytic chamber with the active sites is on the inside of the barrel. Has a gated structure, the ends of the cylinder being occluded by the N-termini of the alpha-subunits. Is capped by the proteasome-associated ATPase, ARC.

Its subcellular location is the cytoplasm. It functions in the pathway protein degradation; proteasomal Pup-dependent pathway. With respect to regulation, the formation of the proteasomal ATPase ARC-20S proteasome complex, likely via the docking of the C-termini of ARC into the intersubunit pockets in the alpha-rings, may trigger opening of the gate for substrate entry. Interconversion between the open-gate and close-gate conformations leads to a dynamic regulation of the 20S proteasome proteolysis activity. In terms of biological role, component of the proteasome core, a large protease complex with broad specificity involved in protein degradation. The chain is Proteasome subunit alpha from Streptomyces scabiei (strain 87.22).